Consider the following 402-residue polypeptide: Argininosuccinate synthase (402 aa).

8–16 (AYSGGLDTS) is a binding site for ATP. L-citrulline-binding residues include Tyr86 and Ser91. ATP is bound at residue Gly116. The L-aspartate site is built by Thr118, Asn122, and Asp123. An L-citrulline-binding site is contributed by Asn122. Residues Arg126, Ser175, Ser184, Glu260, and Tyr272 each contribute to the L-citrulline site.

This sequence belongs to the argininosuccinate synthase family. Type 1 subfamily. As to quaternary structure, homotetramer.

The protein localises to the cytoplasm. The enzyme catalyses L-citrulline + L-aspartate + ATP = 2-(N(omega)-L-arginino)succinate + AMP + diphosphate + H(+). It functions in the pathway amino-acid biosynthesis; L-arginine biosynthesis; L-arginine from L-ornithine and carbamoyl phosphate: step 2/3. In Clostridium novyi (strain NT), this protein is Argininosuccinate synthase.